Consider the following 314-residue polypeptide: Ribosomal RNA small subunit methyltransferase H (314 aa).

S-adenosyl-L-methionine-binding positions include glycine 37–histidine 39, aspartate 56, phenylalanine 86, aspartate 108, and histidine 115.

This sequence belongs to the methyltransferase superfamily. RsmH family.

Its subcellular location is the cytoplasm. The enzyme catalyses cytidine(1402) in 16S rRNA + S-adenosyl-L-methionine = N(4)-methylcytidine(1402) in 16S rRNA + S-adenosyl-L-homocysteine + H(+). In terms of biological role, specifically methylates the N4 position of cytidine in position 1402 (C1402) of 16S rRNA. This is Ribosomal RNA small subunit methyltransferase H from Leptospira biflexa serovar Patoc (strain Patoc 1 / ATCC 23582 / Paris).